The sequence spans 143 residues: Transcriptional regulator MraZ (143 aa).

SpoVT-AbrB domains follow at residues 5–47 and 76–119; these read EYKH…PMHE and ATEC…SSKR.

It belongs to the MraZ family. In terms of assembly, forms oligomers.

Its subcellular location is the cytoplasm. It localises to the nucleoid. The protein is Transcriptional regulator MraZ of Halothermothrix orenii (strain H 168 / OCM 544 / DSM 9562).